Here is a 1066-residue protein sequence, read N- to C-terminus: MTNFKFTLLARSIAFALNASTAYAAQPTNQPTNQPTNQPTNQPTNQPTNQPTNQDSNLSEQLEQINVSGSTETINVKEKKVGETQISAKKLAKQQASDSRDLVRYETGITVVETGRTGASGYAVRGVDENRVGIMVDGLRQAETLSSQGFKELFEGYGNFNNTRNNIEIENVKTATITKGADSLKSGSGALGGSVIFETKDARDYLIDKDYYVSYKRGYQTMNNQNLKTLTLAGRSKKFDILVVDTTRDGHEIENYDYKIYPNKQADLSAVGPTREKADPYQITRQSTLIKLGFQPNENHRLSVALDDSTLETKGMDLSYAFRPYSQADKEIYGERIINDQSKRKNIQFSYENFSQTPFWDHIKLSYSSQKITNKARSDEYCHQSTCNGVSNPQGLHLVEEKGVYKIVDKDNKDFNYQEDKNNPWSYGKELYNSKNEKISNDVDTEGGALDSVLINCEKLNCEKKKFPIYKEKDEEWKDKYEHEDRDITIKELNGKKYGEISLKKSDSSGFTKYESARFLFPKSFGYSTDFVNDRDLNTNTQQIKLDLDKEFHLWHAQHQLKYGGLYEKTLKSMVNHQYNTAANVQWWADYFFCKKPVNGNRIPAPDHSAYRCKLMNSDIGKDTYLIPVTTKNNVLYFGDNVQLTSWLGLDLNYRYDHVKYLPSYDKNIPVPNGLITGLFKKFKSTDYVYGNKYLVPKGYTNCTYTTDCYKQNFEENLALLLRKTDYKHHSYNLGLNLDPTNWLRVQLKYANGFRAPTSDEIYMTFKHPQFSIQPNTDLKAETSKTKEVAFTFYKNSSYITLNAFQNDYRNFIDLVEVGERPIEEGSVVRYPFHQNQNRDRARVRGIEIASRLEMGDLLEKLQRFPLGYKFTYQKGRIKDNGLHPKYKEFLELNKDEHPEYEAIARKPQPMNALQPTTSVYNIGYDAPSQKWGVDMYITNVAAKKAKDSFNSQWTSMVARKEKIYDTESTVPAKKANGKEVKDSRGLWRNNRYTVIDTIAYWKPIKNLTFTAGVYNLTNKKYLTWDSARSVRHLGTINRVETATGKGLNRLYAPGRNYRMSVQFEF.

An N-terminal signal peptide occupies residues 1–24; that stretch reads MTNFKFTLLARSIAFALNASTAYA. Tandem repeats lie at residues 26-29, 30-33, 34-37, 38-41, 42-45, 46-49, and 50-53. Positions 26 to 53 are 7 X 4 AA tandem repeats of Q-P-T-N; it reads QPTNQPTNQPTNQPTNQPTNQPTNQPTN. A compositionally biased stretch (low complexity) spans 26–54; sequence QPTNQPTNQPTNQPTNQPTNQPTNQPTNQ. The interval 26–57 is disordered; the sequence is QPTNQPTNQPTNQPTNQPTNQPTNQPTNQDSN. The TonB box motif lies at 63 to 70; it reads EQINVSGS. In terms of domain architecture, TBDR plug spans 66–200; that stretch reads NVSGSTETIN…LGGSVIFETK (135 aa). The TBDR beta-barrel domain occupies 208–1066; that stretch reads DKDYYVSYKR…NYRMSVQFEF (859 aa). A TonB C-terminal box motif is present at residues 1049-1066; the sequence is NRLYAPGRNYRMSVQFEF.

This sequence belongs to the TonB-dependent receptor family. Hemoglobin/haptoglobin binding protein subfamily.

The protein localises to the cell outer membrane. In terms of biological role, acts as a receptor for hemoglobin or the hemoglobin/haptoglobin complex of the human host and is required for heme uptake. This Haemophilus influenzae protein is Hemoglobin and hemoglobin-haptoglobin-binding protein C (hgpC).